Reading from the N-terminus, the 186-residue chain is Ribosome maturation factor RimM (186 aa).

The region spanning 103–174 is the PRC barrel domain; sequence PEEYHYSDLI…ELQVQPPPGL (72 aa).

It belongs to the RimM family. Binds ribosomal protein uS19.

The protein localises to the cytoplasm. Functionally, an accessory protein needed during the final step in the assembly of 30S ribosomal subunit, possibly for assembly of the head region. Essential for efficient processing of 16S rRNA. May be needed both before and after RbfA during the maturation of 16S rRNA. It has affinity for free ribosomal 30S subunits but not for 70S ribosomes. The protein is Ribosome maturation factor RimM of Synechococcus sp. (strain JA-3-3Ab) (Cyanobacteria bacterium Yellowstone A-Prime).